The following is a 302-amino-acid chain: Quinolinate synthase (302 aa).

2 residues coordinate iminosuccinate: His-24 and Ser-41. [4Fe-4S] cluster is bound at residue Cys-86. Residues Tyr-112–Asn-114 and Ser-129 each bind iminosuccinate. Residue Cys-173 participates in [4Fe-4S] cluster binding. Iminosuccinate-binding positions include His-199–Glu-201 and Thr-216. A [4Fe-4S] cluster-binding site is contributed by Cys-259.

The protein belongs to the quinolinate synthase family. Type 2 subfamily. [4Fe-4S] cluster serves as cofactor.

It localises to the cytoplasm. The enzyme catalyses iminosuccinate + dihydroxyacetone phosphate = quinolinate + phosphate + 2 H2O + H(+). The protein operates within cofactor biosynthesis; NAD(+) biosynthesis; quinolinate from iminoaspartate: step 1/1. In terms of biological role, catalyzes the condensation of iminoaspartate with dihydroxyacetone phosphate to form quinolinate. This is Quinolinate synthase from Thermococcus onnurineus (strain NA1).